An 83-amino-acid chain; its full sequence is Small ribosomal subunit protein eS21 (83 aa).

Belongs to the eukaryotic ribosomal protein eS21 family. Component of the 40S small ribosomal subunit.

It is found in the cytoplasm. The protein resides in the cytosol. It localises to the rough endoplasmic reticulum. Its function is as follows. Component of the small ribosomal subunit. The ribosome is a large ribonucleoprotein complex responsible for the synthesis of proteins in the cell. This Xenopus tropicalis (Western clawed frog) protein is Small ribosomal subunit protein eS21 (rps21).